Consider the following 305-residue polypeptide: PI-PLC X domain-containing protein 2 (305 aa).

Positions 42 to 215 (HLHNLPLSNL…NCQVLIFYHC (174 aa)) constitute a PI-PLC X-box domain. Catalysis depends on residues His57 and His132.

Widely expressed.

Its subcellular location is the nucleus. It carries out the reaction a 1,2-diacyl-sn-glycero-3-phospho-(1D-myo-inositol) + H2O = 1D-myo-inositol 1-phosphate + a 1,2-diacyl-sn-glycerol + H(+). In terms of biological role, catalyzes the hydrolysis of inositol from phosphatidylinositol (1,2-diacyl-sn-glycero-3-phospho-(1D-myo-inositol), PI). Could also hydrolyze various multi-phosphorylated derivatives of PI, such as phosphatidylinositol-4,5 bisphosphate (PIP2), releasing inositol-1,4,5-trisphosphate (IP3) and the protein kinase C activator diacylglycerol (DAG), therefore mediating cell signaling. The polypeptide is PI-PLC X domain-containing protein 2 (PLCXD2) (Homo sapiens (Human)).